The chain runs to 202 residues: Putative 3-methyladenine DNA glycosylase (202 aa).

This sequence belongs to the DNA glycosylase MPG family.

This chain is Putative 3-methyladenine DNA glycosylase, found in Staphylococcus haemolyticus (strain JCSC1435).